The chain runs to 695 residues: Follicle-stimulating hormone receptor (695 aa).

A signal peptide spans 1-17 (MSLLLVSLLAFLTLGSG). 2 cysteine pairs are disulfide-bonded: C18–C25 and C23–C32. Residues 18-46 (CHHRICHCSNGVFLCQESKVTEIPPDLPR) form the LRRNT domain. At 18–366 (CHHRICHCSN…EDIMGHDILR (349 aa)) the chain is on the extracellular side. LRR repeat units follow at residues 49 to 72 (VELR…FGDL), 73 to 97 (EKIE…LPKL), 98 to 118 (HEIR…AFQN), 119 to 143 (LPNL…KIQS), 144 to 169 (LQKV…VGLS), 170 to 192 (FESM…AFNG), 193 to 216 (TQLD…VFQG), 217 to 240 (ASGP…GLEN), and 241 to 259 (LKKL…PSLE). N191 and N199 each carry an N-linked (GlcNAc...) asparagine glycan. Disulfide bonds link C275–C346, C276–C292, C276–C356, and C292–C338. N293 carries an N-linked (GlcNAc...) asparagine glycan. Y335 is subject to Sulfotyrosine. A helical transmembrane segment spans residues 367–387 (VLIWFISILAITGNIIVLVIL). The Cytoplasmic portion of the chain corresponds to 388–398 (ITSQYKLTVPR). The chain crosses the membrane as a helical span at residues 399–421 (FLMCNLAFADLCIGIYLLLIASV). Residues 422–443 (DIHTKTQYHNYAIDWQTGAGCD) lie on the Extracellular side of the membrane. A disulfide bridge links C442 with C517. Residues 444–465 (AAGFFTVFASELSVYTLTAITL) traverse the membrane as a helical segment. At 466–485 (ERWHTITHAMQLQCKVQLRH) the chain is on the cytoplasmic side. The helical transmembrane segment at 486–508 (AASIMLVGWIFAFTVALFPIFGI) threads the bilayer. Topologically, residues 509 to 528 (SSYMKVSICLPMDIDSPLSQ) are extracellular. The helical transmembrane segment at 529-550 (LYVVSLLVLNVLAFVVICGCYT) threads the bilayer. Residues 551 to 573 (HIYLTVRNPNIMSSSSDTKIAKR) lie on the Cytoplasmic side of the membrane. A helical transmembrane segment spans residues 574-597 (MAMLIFTDFLCMAPISFFAISASL). Topologically, residues 598–608 (KVPLITVSKSK) are extracellular. A helical transmembrane segment spans residues 609–630 (ILLVLFYPINSCANPFLYAIFT). The Cytoplasmic portion of the chain corresponds to 631 to 695 (KNFRRDVFIL…LIPLSRLAQN (65 aa)).

This sequence belongs to the G-protein coupled receptor 1 family. FSH/LSH/TSH subfamily. Homotrimer. Functions as a homotrimer binding the FSH hormone heterodimer composed of CGA and FSHB. Interacts with ARRB2. Interacts with APPL2; interaction is independent of follicle stimulating hormone stimulation. In terms of processing, N-glycosylated; indirectly required for FSH-binding, possibly via a conformational change that allows high affinity binding of hormone. Post-translationally, sulfated.

The protein resides in the cell membrane. Functionally, g protein-coupled receptor for follitropin, the follicle-stimulating hormone. Through cAMP production activates the downstream PI3K-AKT and ERK1/ERK2 signaling pathways. The sequence is that of Follicle-stimulating hormone receptor (FSHR) from Sus scrofa (Pig).